The primary structure comprises 404 residues: Glucose-1-phosphate adenylyltransferase (404 aa).

Alpha-D-glucose 1-phosphate is bound by residues tyrosine 99, glycine 164, 179–180 (EK), and serine 197.

Belongs to the bacterial/plant glucose-1-phosphate adenylyltransferase family.

It carries out the reaction alpha-D-glucose 1-phosphate + ATP + H(+) = ADP-alpha-D-glucose + diphosphate. The protein operates within capsule biogenesis; capsule polysaccharide biosynthesis. Its pathway is glycan biosynthesis; glycogen biosynthesis. Involved in the biosynthesis of ADP-glucose, a building block, required in the biosynthesis of maltose-1-phosphate (M1P) and in the elongation reactions to produce linear alpha-1,4-glucans. Catalyzes the reaction between ATP and alpha-D-glucose 1-phosphate (G1P) to produce pyrophosphate and ADP-Glc. The sequence is that of Glucose-1-phosphate adenylyltransferase from Mycobacteroides abscessus (strain ATCC 19977 / DSM 44196 / CCUG 20993 / CIP 104536 / JCM 13569 / NCTC 13031 / TMC 1543 / L948) (Mycobacterium abscessus).